A 590-amino-acid chain; its full sequence is Probable lysine-specific demethylase 4B (590 aa).

A JmjN domain is found at 9–51 (IKVFRPTWEEFKDFPKYVAYMESQGAHKAGLAKVVPPPEWVPR). 2-oxoglutarate is bound at residue Y130. One can recognise a JmjC domain in the interval 140 to 306 (DTDQDSWNIN…YGKRAVQCTC (167 aa)). Residues H186 and E188 each contribute to the Fe cation site. The 2-oxoglutarate site is built by N196 and K204. Residues C232 and H238 each coordinate Zn(2+). Position 239 (K239) interacts with 2-oxoglutarate. Residue H274 participates in Fe cation binding. Zn(2+) contacts are provided by C304 and C306. Disordered regions lie at residues 372 to 395 (PTKA…QNPN) and 417 to 590 (ATDE…TASP). Residues 445–458 (EYIDDGTEDDDEEE) show a composition bias toward acidic residues. Residues 480 to 494 (SKRKTNSRNNRGRSP) show a composition bias toward basic residues. Low complexity-rich tracts occupy residues 502–513 (ISPASSTSSTSR) and 537–571 (TTSP…TPPA).

This sequence belongs to the JHDM3 histone demethylase family. Fe(2+) is required as a cofactor.

It is found in the nucleus. It carries out the reaction N(6),N(6),N(6)-trimethyl-L-lysyl(9)-[histone H3] + 2 2-oxoglutarate + 2 O2 = N(6)-methyl-L-lysyl(9)-[histone H3] + 2 formaldehyde + 2 succinate + 2 CO2. Functionally, probable histone demethylase that specifically demethylates 'Lys-9' and 'Lys-36' residues of histone H3, thereby playing a central role in histone code. Demethylation of Lys residue generates formaldehyde and succinate. In Drosophila melanogaster (Fruit fly), this protein is Probable lysine-specific demethylase 4B (Kdm4B).